A 216-amino-acid polypeptide reads, in one-letter code: Coiled-coil domain-containing protein 124 (216 aa).

Disordered stretches follow at residues 1–93 (MPKK…PSKV) and 194–216 (LKKE…YNTK). Positions 18 to 90 (RKAEAKAVAD…IKGKQTKEGP (73 aa)) are enriched in basic and acidic residues. Residues 18 to 119 (RKAEAKAVAD…EIKEKEKSHL (102 aa)) are a coiled coil. Polar residues predominate over residues 201–216 (SPENPLNQRAASYNTK).

It belongs to the CCDC124 family. As to quaternary structure, associates with translationally inactive ribosomes in the nonrotated state.

The protein localises to the cytoplasm. It localises to the cytoskeleton. It is found in the microtubule organizing center. The protein resides in the centrosome. Its subcellular location is the midbody. Its function is as follows. Ribosome-binding protein involved in ribosome hibernation: associates with translationally inactive ribosomes and stabilizes the nonrotated conformation of the 80S ribosome, thereby promoting ribosome preservation and storage. The protein is Coiled-coil domain-containing protein 124 (ccdc124) of Danio rerio (Zebrafish).